The primary structure comprises 59 residues: Conotoxin Bu1.2 (59 aa).

Residues 1–16 (MFTVFLLVVLATTVVS) form the signal peptide. Positions 17 to 42 (FSTDDESDGSNEEPSADQAARSAMNR) are excised as a propeptide. Residues 18–43 (STDDESDGSNEEPSADQAARSAMNRP) are disordered. Acidic residues predominate over residues 19 to 31 (TDDESDGSNEEPS). 2 disulfides stabilise this stretch: Cys46/Cys52 and Cys47/Cys57. Gly58 is modified (glycine amide).

It belongs to the conotoxin A superfamily. As to expression, expressed by the venom duct.

The protein resides in the secreted. This chain is Conotoxin Bu1.2, found in Conus bullatus (Bubble cone).